The sequence spans 515 residues: Folate synthesis bifunctional protein, mitochondrial (515 aa).

The N-terminal 28 residues, 1–28, are a transit peptide targeting the mitochondrion; that stretch reads MSILKCLGVRGNQLCAARNYLKVLGFSS. Residues 47–172 are HPPK; the sequence is VIALGSNVGD…PFVMAPLMDL (126 aa). Positions 230–498 constitute a Pterin-binding domain; that stretch reads TLVMGILNLT…NVKDNLDAVK (269 aa). A DHPS region spans residues 232 to 515; sequence VMGILNLTPD…QKSSPIKFKQ (284 aa). Asn-237 serves as a coordination point for Mg(2+). (7,8-dihydropterin-6-yl)methyl diphosphate is bound by residues Thr-277, Asp-314, Asn-333, Asp-406, Lys-451, and 486-488; that span reads RVH.

This sequence in the N-terminal section; belongs to the HPPK family. In the C-terminal section; belongs to the DHPS family. Homomultimer. Mg(2+) serves as cofactor.

It is found in the mitochondrion. The catalysed reaction is 6-hydroxymethyl-7,8-dihydropterin + ATP = (7,8-dihydropterin-6-yl)methyl diphosphate + AMP + H(+). It carries out the reaction (7,8-dihydropterin-6-yl)methyl diphosphate + 4-aminobenzoate = 7,8-dihydropteroate + diphosphate. Its pathway is cofactor biosynthesis; tetrahydrofolate biosynthesis; 2-amino-4-hydroxy-6-hydroxymethyl-7,8-dihydropteridine diphosphate from 7,8-dihydroneopterin triphosphate: step 4/4. It functions in the pathway cofactor biosynthesis; tetrahydrofolate biosynthesis; 7,8-dihydrofolate from 2-amino-4-hydroxy-6-hydroxymethyl-7,8-dihydropteridine diphosphate and 4-aminobenzoate: step 1/2. In terms of biological role, catalyzes the first two consecutive steps of tetrahydrofolate biosynthesis. In Pisum sativum (Garden pea), this protein is Folate synthesis bifunctional protein, mitochondrial.